We begin with the raw amino-acid sequence, 451 residues long: Exodeoxyribonuclease 7 large subunit (451 aa).

It belongs to the XseA family. Heterooligomer composed of large and small subunits.

It localises to the cytoplasm. The enzyme catalyses Exonucleolytic cleavage in either 5'- to 3'- or 3'- to 5'-direction to yield nucleoside 5'-phosphates.. In terms of biological role, bidirectionally degrades single-stranded DNA into large acid-insoluble oligonucleotides, which are then degraded further into small acid-soluble oligonucleotides. The polypeptide is Exodeoxyribonuclease 7 large subunit (Neisseria gonorrhoeae (strain ATCC 700825 / FA 1090)).